The chain runs to 467 residues: Glutamate--tRNA ligase 1 (467 aa).

Positions 8-18 match the 'HIGH' region motif; that stretch reads PSPTGHLHVGG. The short motif at 230 to 234 is the 'KMSKS' region element; sequence PLSKR. Position 233 (Lys233) interacts with ATP.

Belongs to the class-I aminoacyl-tRNA synthetase family. Glutamate--tRNA ligase type 1 subfamily. Monomer.

The protein resides in the cytoplasm. The catalysed reaction is tRNA(Glu) + L-glutamate + ATP = L-glutamyl-tRNA(Glu) + AMP + diphosphate. Functionally, catalyzes the attachment of glutamate to tRNA(Glu) in a two-step reaction: glutamate is first activated by ATP to form Glu-AMP and then transferred to the acceptor end of tRNA(Glu). The chain is Glutamate--tRNA ligase 1 from Petrotoga mobilis (strain DSM 10674 / SJ95).